A 69-amino-acid chain; its full sequence is Large ribosomal subunit protein bL31 (69 aa).

4 residues coordinate Zn(2+): cysteine 17, cysteine 19, cysteine 37, and cysteine 40.

Belongs to the bacterial ribosomal protein bL31 family. Type A subfamily. Part of the 50S ribosomal subunit. Zn(2+) serves as cofactor.

Binds the 23S rRNA. In Clostridium novyi (strain NT), this protein is Large ribosomal subunit protein bL31.